The sequence spans 514 residues: Bifunctional purine biosynthesis protein PurH (514 aa).

The MGS-like domain occupies 1-145 (MIKRALISVS…KNYQDVVVIV (145 aa)).

This sequence belongs to the PurH family.

It catalyses the reaction (6R)-10-formyltetrahydrofolate + 5-amino-1-(5-phospho-beta-D-ribosyl)imidazole-4-carboxamide = 5-formamido-1-(5-phospho-D-ribosyl)imidazole-4-carboxamide + (6S)-5,6,7,8-tetrahydrofolate. The catalysed reaction is IMP + H2O = 5-formamido-1-(5-phospho-D-ribosyl)imidazole-4-carboxamide. Its pathway is purine metabolism; IMP biosynthesis via de novo pathway; 5-formamido-1-(5-phospho-D-ribosyl)imidazole-4-carboxamide from 5-amino-1-(5-phospho-D-ribosyl)imidazole-4-carboxamide (10-formyl THF route): step 1/1. The protein operates within purine metabolism; IMP biosynthesis via de novo pathway; IMP from 5-formamido-1-(5-phospho-D-ribosyl)imidazole-4-carboxamide: step 1/1. In Acetivibrio thermocellus (strain ATCC 27405 / DSM 1237 / JCM 9322 / NBRC 103400 / NCIMB 10682 / NRRL B-4536 / VPI 7372) (Clostridium thermocellum), this protein is Bifunctional purine biosynthesis protein PurH.